Consider the following 226-residue polypeptide: Protein AhpA (226 aa).

A run of 2 helical transmembrane segments spans residues 12–32 and 169–189; these read SMIS…LFGV and GELI…HYFL.

It belongs to the Smp family.

It localises to the cell inner membrane. When anaerobically expressed in wild-type E.coli K12 confers a hemolytic phenotype, but not in an sheA mutant. Suggests it affects the expression of the latent E.coli K12 hemolysin sheA under anaerobic conditions. The sequence is that of Protein AhpA (ahpA) from Pasteurella multocida (strain Pm70).